Consider the following 345-residue polypeptide: Tropomodulin-4 (345 aa).

The interval 42–63 (NMLLPAGLRQRDQTKKSPTGPL) is disordered.

This sequence belongs to the tropomodulin family. Binds to the N-terminus of tropomyosin and to actin.

Its subcellular location is the cytoplasm. The protein resides in the cytoskeleton. Functionally, blocks the elongation and depolymerization of the actin filaments at the pointed end. The Tmod/TM complex contributes to the formation of the short actin protofilament, which in turn defines the geometry of the membrane skeleton. In Bos taurus (Bovine), this protein is Tropomodulin-4 (TMOD4).